Reading from the N-terminus, the 287-residue chain is Regulator of V-ATPase in vacuolar membrane protein 2 (287 aa).

As to quaternary structure, component of the RAVE complex composed of rav1, rav2 and skp1.

It is found in the cytoplasm. The protein resides in the nucleus. Its function is as follows. Component of the RAVE complex which is required for stable assembly of the vacuolar ATPase complex V-ATPase. In Schizosaccharomyces pombe (strain 972 / ATCC 24843) (Fission yeast), this protein is Regulator of V-ATPase in vacuolar membrane protein 2 (rav2).